Here is a 254-residue protein sequence, read N- to C-terminus: Thiazole synthase (254 aa).

Lys96 acts as the Schiff-base intermediate with DXP in catalysis. Residues Gly157, 183–184, and 205–206 each bind 1-deoxy-D-xylulose 5-phosphate; these read AG and NT.

Belongs to the ThiG family. Homotetramer. Forms heterodimers with either ThiH or ThiS.

It localises to the cytoplasm. The enzyme catalyses [ThiS sulfur-carrier protein]-C-terminal-Gly-aminoethanethioate + 2-iminoacetate + 1-deoxy-D-xylulose 5-phosphate = [ThiS sulfur-carrier protein]-C-terminal Gly-Gly + 2-[(2R,5Z)-2-carboxy-4-methylthiazol-5(2H)-ylidene]ethyl phosphate + 2 H2O + H(+). The protein operates within cofactor biosynthesis; thiamine diphosphate biosynthesis. Its function is as follows. Catalyzes the rearrangement of 1-deoxy-D-xylulose 5-phosphate (DXP) to produce the thiazole phosphate moiety of thiamine. Sulfur is provided by the thiocarboxylate moiety of the carrier protein ThiS. In vitro, sulfur can be provided by H(2)S. This chain is Thiazole synthase, found in Clostridium kluyveri (strain ATCC 8527 / DSM 555 / NBRC 12016 / NCIMB 10680 / K1).